Consider the following 336-residue polypeptide: Glycerol-3-phosphate dehydrogenase [NAD(P)+] (336 aa).

5 residues coordinate NADPH: serine 11, tryptophan 12, arginine 32, arginine 33, and lysine 110. Residues lysine 110 and glycine 140 each contribute to the sn-glycerol 3-phosphate site. Residue alanine 144 coordinates NADPH. Lysine 195, aspartate 248, serine 258, arginine 259, and asparagine 260 together coordinate sn-glycerol 3-phosphate. Lysine 195 serves as the catalytic Proton acceptor. Arginine 259 is a binding site for NADPH. The NADPH site is built by valine 284 and glutamate 286.

The protein belongs to the NAD-dependent glycerol-3-phosphate dehydrogenase family.

The protein localises to the cytoplasm. It catalyses the reaction sn-glycerol 3-phosphate + NAD(+) = dihydroxyacetone phosphate + NADH + H(+). The catalysed reaction is sn-glycerol 3-phosphate + NADP(+) = dihydroxyacetone phosphate + NADPH + H(+). Its pathway is membrane lipid metabolism; glycerophospholipid metabolism. Catalyzes the reduction of the glycolytic intermediate dihydroxyacetone phosphate (DHAP) to sn-glycerol 3-phosphate (G3P), the key precursor for phospholipid synthesis. In Nocardia farcinica (strain IFM 10152), this protein is Glycerol-3-phosphate dehydrogenase [NAD(P)+].